Consider the following 163-residue polypeptide: Phosphopantetheine adenylyltransferase (163 aa).

Thr-11 is a substrate binding site. Residues Thr-11–Phe-12 and His-19 contribute to the ATP site. Positions 43, 75, and 89 each coordinate substrate. ATP-binding positions include Gly-90–Arg-92, Glu-100, and Tyr-125–Thr-131.

The protein belongs to the bacterial CoaD family. Homohexamer. Mg(2+) serves as cofactor.

The protein localises to the cytoplasm. The catalysed reaction is (R)-4'-phosphopantetheine + ATP + H(+) = 3'-dephospho-CoA + diphosphate. The protein operates within cofactor biosynthesis; coenzyme A biosynthesis; CoA from (R)-pantothenate: step 4/5. Functionally, reversibly transfers an adenylyl group from ATP to 4'-phosphopantetheine, yielding dephospho-CoA (dPCoA) and pyrophosphate. This is Phosphopantetheine adenylyltransferase from Aromatoleum aromaticum (strain DSM 19018 / LMG 30748 / EbN1) (Azoarcus sp. (strain EbN1)).